The following is a 333-amino-acid chain: Olfactory receptor 1078 (333 aa).

The Extracellular portion of the chain corresponds to 1 to 25 (MDSSNRTRVSEFLLLGFVENKDLQP). N-linked (GlcNAc...) asparagine glycosylation occurs at N5. A helical membrane pass occupies residues 26 to 50 (LIYGLFLSMYLVTVIGNISIIVAII). Residues 51–57 (SDPCLHT) are Cytoplasmic-facing. The helical transmembrane segment at 58–79 (PMYFFLSNLSFVDICFISTTVP) threads the bilayer. Topologically, residues 80 to 100 (KMLVNIQTQNNVITYAGCITQ) are extracellular. Cysteines 97 and 189 form a disulfide. The helical transmembrane segment at 101 to 120 (IYFFLLFVELDNFLLTIMAY) threads the bilayer. At 121-139 (DRYVAICHPMHYTVIMNYK) the chain is on the cytoplasmic side. A helical transmembrane segment spans residues 140–158 (LCGFLVLVSWIVSVLHALF). Residues 159–196 (QSLMMLALPFCTHLEIPHYFCEPNQVIQLTCSDAFLND) lie on the Extracellular side of the membrane. A helical membrane pass occupies residues 197–219 (LVIYFTLVLLATVPLAGIFYSYF). At 220 to 236 (KIVSSICAISSVHGKYK) the chain is on the cytoplasmic side. Residues 237-260 (AFSTCASHLSVVSLFYCTGLGVYL) traverse the membrane as a helical segment. The Extracellular portion of the chain corresponds to 261–272 (SSAANNSSQASA). A helical membrane pass occupies residues 273-292 (TASVMYTVVTPMVNPFIYSL). The Cytoplasmic portion of the chain corresponds to 293 to 333 (RNKDVKSVLKKTLCEEVIRSPPSLLHFFLVLCHLPCFIFCY).

The protein belongs to the G-protein coupled receptor 1 family. As to expression, olfactory epithelium.

It is found in the cell membrane. In terms of biological role, odorant receptor. The sequence is that of Olfactory receptor 1078 (Olr1078) from Rattus norvegicus (Rat).